Consider the following 280-residue polypeptide: Eukaryotic translation initiation factor 3 subunit F-1 (280 aa).

The 131-residue stretch at 8–138 (VRVHPVVLFQ…LRAYVCIQLG (131 aa)) folds into the MPN domain.

The protein belongs to the eIF-3 subunit F family. As to quaternary structure, component of the eukaryotic translation initiation factor 3 (eIF-3) complex. The eIF-3 complex interacts with pix.

Its subcellular location is the cytoplasm. Functionally, component of the eukaryotic translation initiation factor 3 (eIF-3) complex, which is involved in protein synthesis of a specialized repertoire of mRNAs and, together with other initiation factors, stimulates binding of mRNA and methionyl-tRNAi to the 40S ribosome. The eIF-3 complex specifically targets and initiates translation of a subset of mRNAs involved in cell proliferation. In Drosophila yakuba (Fruit fly), this protein is Eukaryotic translation initiation factor 3 subunit F-1.